The sequence spans 356 residues: S-adenosylmethionine:tRNA ribosyltransferase-isomerase (356 aa).

It belongs to the QueA family. Monomer.

The protein resides in the cytoplasm. The catalysed reaction is 7-aminomethyl-7-carbaguanosine(34) in tRNA + S-adenosyl-L-methionine = epoxyqueuosine(34) in tRNA + adenine + L-methionine + 2 H(+). It functions in the pathway tRNA modification; tRNA-queuosine biosynthesis. Its function is as follows. Transfers and isomerizes the ribose moiety from AdoMet to the 7-aminomethyl group of 7-deazaguanine (preQ1-tRNA) to give epoxyqueuosine (oQ-tRNA). The protein is S-adenosylmethionine:tRNA ribosyltransferase-isomerase of Yersinia pestis.